A 126-amino-acid chain; its full sequence is Alpha-lactalbumin (126 aa).

The region spanning 1-126 (RIFQICELSR…CNSDLDQWKC (126 aa)) is the C-type lysozyme domain. Cystine bridges form between cysteine 6/cysteine 126, cysteine 30/cysteine 117, cysteine 63/cysteine 82, and cysteine 78/cysteine 96. Asparagine 47 carries an N-linked (GlcNAc...) asparagine glycan. 5 residues coordinate Ca(2+): lysine 84, aspartate 87, aspartate 89, aspartate 92, and aspartate 93.

It belongs to the glycosyl hydrolase 22 family. Lactose synthase (LS) is a heterodimer of a catalytic component, beta1,4-galactosyltransferase (beta4Gal-T1) and a regulatory component, alpha-lactalbumin (LA). In terms of tissue distribution, mammary gland specific. Secreted in milk.

The protein localises to the secreted. Regulatory subunit of lactose synthase, changes the substrate specificity of galactosyltransferase in the mammary gland making glucose a good acceptor substrate for this enzyme. This enables LS to synthesize lactose, the major carbohydrate component of milk. In other tissues, galactosyltransferase transfers galactose onto the N-acetylglucosamine of the oligosaccharide chains in glycoproteins. The polypeptide is Alpha-lactalbumin (LALBA) (Ornithorhynchus anatinus (Duckbill platypus)).